A 217-amino-acid polypeptide reads, in one-letter code: Large ribosomal subunit protein bL25 (217 aa).

The tract at residues 178-217 (VVAPTEEPTEEEIEAMEGEQQTEEPEVVGESKEDEEKTEE) is disordered. Positions 184-205 (EPTEEEIEAMEGEQQTEEPEVV) are enriched in acidic residues. Residues 206-217 (GESKEDEEKTEE) show a composition bias toward basic and acidic residues.

The protein belongs to the bacterial ribosomal protein bL25 family. CTC subfamily. As to quaternary structure, part of the 50S ribosomal subunit; part of the 5S rRNA/L5/L18/L25 subcomplex. Contacts the 5S rRNA. Binds to the 5S rRNA independently of L5 and L18.

This is one of the proteins that binds to the 5S RNA in the ribosome where it forms part of the central protuberance. The sequence is that of Large ribosomal subunit protein bL25 from Staphylococcus aureus (strain MRSA252).